Here is a 239-residue protein sequence, read N- to C-terminus: C-8 sterol isomerase erg2 (239 aa).

An N-linked (GlcNAc...) asparagine glycan is attached at N11. Residues 27-47 (KFGFLAVFVAIFAALYSYLDA) form a helical membrane-spanning segment. N73 carries an N-linked (GlcNAc...) asparagine glycan.

It belongs to the ERG2 family.

It is found in the endoplasmic reticulum membrane. It catalyses the reaction fecosterol = episterol. It participates in steroid metabolism; ergosterol biosynthesis. Functionally, C-8 sterol isomerase; part of the third module of ergosterol biosynthesis pathway that includes the late steps of the pathway. Erg2 catalyzes the reaction which results in unsaturation at C-7 in the B ring of sterols and thus converts fecosterol to episterol. The third module or late pathway involves the ergosterol synthesis itself through consecutive reactions that mainly occur in the endoplasmic reticulum (ER) membrane. Firstly, the squalene synthase erg9 catalyzes the condensation of 2 farnesyl pyrophosphate moieties to form squalene, which is the precursor of all steroids. Squalene synthase is crucial for balancing the incorporation of farnesyl diphosphate (FPP) into sterol and nonsterol isoprene synthesis. Secondly, squalene is converted into lanosterol by the consecutive action of the squalene epoxidase erg1 and the lanosterol synthase erg7. Then, the delta(24)-sterol C-methyltransferase erg6 methylates lanosterol at C-24 to produce eburicol. Eburicol is the substrate of the sterol 14-alpha demethylase encoded by cyp51A and cyp51B, to yield 4,4,24-trimethyl ergosta-8,14,24(28)-trienol. The C-14 reductase erg24 then reduces the C14=C15 double bond which leads to 4,4-dimethylfecosterol. A sequence of further demethylations at C-4, involving the C-4 demethylation complex containing the C-4 methylsterol oxidases erg25A or erg25B, the sterol-4-alpha-carboxylate 3-dehydrogenase erg26 and the 3-keto-steroid reductase erg27, leads to the production of fecosterol via 4-methylfecosterol. The C-8 sterol isomerase erg2 then catalyzes the reaction which results in unsaturation at C-7 in the B ring of sterols and thus converts fecosterol to episterol. The sterol-C5-desaturase erg3B then catalyzes the introduction of a C-5 double bond in the B ring to produce 5-dehydroepisterol. The 2 other sterol-C5-desaturases, erg3A and erg3C, seem to be less important in ergosterol biosynthesis. The C-22 sterol desaturase erg5 further converts 5-dehydroepisterol into ergosta-5,7,22,24(28)-tetraen-3beta-ol by forming the C-22(23) double bond in the sterol side chain. Finally, ergosta-5,7,22,24(28)-tetraen-3beta-ol is substrate of the C-24(28) sterol reductases erg4A and erg4B to produce ergosterol. Possible alternative sterol biosynthetic pathways might exist from fecosterol to ergosterol, depending on the activities of the erg3 isoforms. The sequence is that of C-8 sterol isomerase erg2 from Aspergillus fumigatus (strain ATCC MYA-4609 / CBS 101355 / FGSC A1100 / Af293) (Neosartorya fumigata).